Reading from the N-terminus, the 497-residue chain is Glycogen synthase (497 aa).

ADP-alpha-D-glucose is bound at residue Lys15.

It belongs to the glycosyltransferase 1 family. Bacterial/plant glycogen synthase subfamily.

The enzyme catalyses [(1-&gt;4)-alpha-D-glucosyl](n) + ADP-alpha-D-glucose = [(1-&gt;4)-alpha-D-glucosyl](n+1) + ADP + H(+). The protein operates within glycan biosynthesis; glycogen biosynthesis. In terms of biological role, synthesizes alpha-1,4-glucan chains using ADP-glucose. The polypeptide is Glycogen synthase (Thermodesulfovibrio yellowstonii (strain ATCC 51303 / DSM 11347 / YP87)).